A 272-amino-acid chain; its full sequence is Phosphate import ATP-binding protein PstB (272 aa).

The ABC transporter domain occupies 20-267 (VKKEVVYETN…PADQRTADYI (248 aa)). Residue 58–65 (GPSGCGKS) participates in ATP binding.

The protein belongs to the ABC transporter superfamily. Phosphate importer (TC 3.A.1.7) family. In terms of assembly, the complex is composed of two ATP-binding proteins (PstB), two transmembrane proteins (PstC and PstA) and a solute-binding protein (PstS).

It is found in the cell membrane. The catalysed reaction is phosphate(out) + ATP + H2O = ADP + 2 phosphate(in) + H(+). Functionally, part of the ABC transporter complex PstSACB involved in phosphate import. Responsible for energy coupling to the transport system. The polypeptide is Phosphate import ATP-binding protein PstB (Geobacillus kaustophilus (strain HTA426)).